A 265-amino-acid chain; its full sequence is Mlc titration factor A (265 aa).

Residues His111, His148, His152, and Glu211 each contribute to the Zn(2+) site.

This sequence belongs to the MtfA family. In terms of assembly, interacts with Mlc with high affinity. The cofactor is Zn(2+).

It is found in the cytoplasm. With respect to regulation, proteolytic activity is stimulated by interaction with Mlc. Addition of the chelators EDTA or phenanthroline significantly reduces the peptidase activity, whereas the addition of other protease inhibitors has much less effect. Its function is as follows. Involved in the modulation of the activity of the glucose-phosphotransferase system (glucose-PTS). Interacts with the transcriptional repressor Mlc, preventing its interaction with DNA and leading to the modulation of expression of genes regulated by Mlc, including ptsG, which encodes the PTS system glucose-specific EIICB component. Functionally, shows zinc-dependent metallopeptidase activity. In vitro, can cleave several artificial substrates. The greatest activity and specificity is observed for L-alanine fused to 4-nitroanilide (L-alanine-pNA). Shows significantly lower activity towards L-arginine-pNA, L-proline-pNA, hippuryl-L-phenylalanine and hippuryl-L-arginine, and cannot use FTC-casein. Mlc does not appear to be a biologically relevant peptidase substrate. Biologically relevant targets may have a function in growth transition under changing environmental conditions. The polypeptide is Mlc titration factor A (Escherichia coli (strain K12)).